The sequence spans 202 residues: Interleukin-17D (202 aa).

Positions 1–15 are cleaved as a signal peptide; that stretch reads MLVAGFLLALPPSWA. A disordered region spans residues 65–85; that stretch reads QARNASCPAGGRPADRRFRPP. N-linked (GlcNAc...) asparagine glycosylation is found at N68 and N181.

Belongs to the IL-17 family. Expressed preferentially in adipose, skeletal muscle and CNS.

It is found in the secreted. Functionally, induces expression of IL6, CXCL8/IL8, and CSF2/GM-CSF from endothelial cells. The polypeptide is Interleukin-17D (IL17D) (Homo sapiens (Human)).